The primary structure comprises 102 residues: NADH-quinone oxidoreductase subunit K (102 aa).

A run of 3 helical transmembrane segments spans residues Leu6–Ala26, Met30–Ala50, and Met63–Leu83.

This sequence belongs to the complex I subunit 4L family. As to quaternary structure, NDH-1 is composed of 14 different subunits. Subunits NuoA, H, J, K, L, M, N constitute the membrane sector of the complex.

Its subcellular location is the cell inner membrane. It catalyses the reaction a quinone + NADH + 5 H(+)(in) = a quinol + NAD(+) + 4 H(+)(out). Its function is as follows. NDH-1 shuttles electrons from NADH, via FMN and iron-sulfur (Fe-S) centers, to quinones in the respiratory chain. The immediate electron acceptor for the enzyme in this species is believed to be ubiquinone. Couples the redox reaction to proton translocation (for every two electrons transferred, four hydrogen ions are translocated across the cytoplasmic membrane), and thus conserves the redox energy in a proton gradient. The sequence is that of NADH-quinone oxidoreductase subunit K from Rhodopseudomonas palustris (strain TIE-1).